The primary structure comprises 421 residues: 3-isopropylmalate dehydratase large subunit (421 aa).

[4Fe-4S] cluster-binding residues include Cys-300, Cys-360, and Cys-363.

Belongs to the aconitase/IPM isomerase family. LeuC type 2 subfamily. As to quaternary structure, heterodimer of LeuC and LeuD. [4Fe-4S] cluster serves as cofactor.

The catalysed reaction is (2R,3S)-3-isopropylmalate = (2S)-2-isopropylmalate. It functions in the pathway amino-acid biosynthesis; L-leucine biosynthesis; L-leucine from 3-methyl-2-oxobutanoate: step 2/4. In terms of biological role, catalyzes the isomerization between 2-isopropylmalate and 3-isopropylmalate, via the formation of 2-isopropylmaleate. This is 3-isopropylmalate dehydratase large subunit from Thermodesulfovibrio yellowstonii (strain ATCC 51303 / DSM 11347 / YP87).